A 212-amino-acid chain; its full sequence is Phosphatidylserine decarboxylase proenzyme (212 aa).

The active-site Schiff-base intermediate with substrate; via pyruvic acid is the S182. S182 carries the post-translational modification Pyruvic acid (Ser); by autocatalysis.

The protein belongs to the phosphatidylserine decarboxylase family. PSD-A subfamily. Heterodimer of a large membrane-associated beta subunit and a small pyruvoyl-containing alpha subunit. Pyruvate serves as cofactor. Post-translationally, is synthesized initially as an inactive proenzyme. Formation of the active enzyme involves a self-maturation process in which the active site pyruvoyl group is generated from an internal serine residue via an autocatalytic post-translational modification. Two non-identical subunits are generated from the proenzyme in this reaction, and the pyruvate is formed at the N-terminus of the alpha chain, which is derived from the carboxyl end of the proenzyme. The post-translation cleavage follows an unusual pathway, termed non-hydrolytic serinolysis, in which the side chain hydroxyl group of the serine supplies its oxygen atom to form the C-terminus of the beta chain, while the remainder of the serine residue undergoes an oxidative deamination to produce ammonia and the pyruvoyl prosthetic group on the alpha chain.

It is found in the cell membrane. It catalyses the reaction a 1,2-diacyl-sn-glycero-3-phospho-L-serine + H(+) = a 1,2-diacyl-sn-glycero-3-phosphoethanolamine + CO2. It participates in phospholipid metabolism; phosphatidylethanolamine biosynthesis; phosphatidylethanolamine from CDP-diacylglycerol: step 2/2. Catalyzes the formation of phosphatidylethanolamine (PtdEtn) from phosphatidylserine (PtdSer). The chain is Phosphatidylserine decarboxylase proenzyme from Chlorobium luteolum (strain DSM 273 / BCRC 81028 / 2530) (Pelodictyon luteolum).